The following is a 327-amino-acid chain: Undecaprenyl-phosphate 4-deoxy-4-formamido-L-arabinose transferase (327 aa).

2 helical membrane-spanning segments follow: residues Leu-236–Val-256 and Val-270–Leu-290.

This sequence belongs to the glycosyltransferase 2 family.

Its subcellular location is the cell inner membrane. It catalyses the reaction UDP-4-deoxy-4-formamido-beta-L-arabinose + di-trans,octa-cis-undecaprenyl phosphate = 4-deoxy-4-formamido-alpha-L-arabinopyranosyl di-trans,octa-cis-undecaprenyl phosphate + UDP. It functions in the pathway glycolipid biosynthesis; 4-amino-4-deoxy-alpha-L-arabinose undecaprenyl phosphate biosynthesis; 4-amino-4-deoxy-alpha-L-arabinose undecaprenyl phosphate from UDP-4-deoxy-4-formamido-beta-L-arabinose and undecaprenyl phosphate: step 1/2. The protein operates within bacterial outer membrane biogenesis; lipopolysaccharide biosynthesis. Functionally, catalyzes the transfer of 4-deoxy-4-formamido-L-arabinose from UDP to undecaprenyl phosphate. The modified arabinose is attached to lipid A and is required for resistance to polymyxin and cationic antimicrobial peptides. The chain is Undecaprenyl-phosphate 4-deoxy-4-formamido-L-arabinose transferase from Klebsiella pneumoniae subsp. pneumoniae (strain ATCC 700721 / MGH 78578).